The primary structure comprises 109 residues: Putative double-stranded DNA mimic protein CKO_01325 (109 aa).

This sequence belongs to the putative dsDNA mimic protein family.

In terms of biological role, may act as a double-stranded DNA (dsDNA) mimic. Probably regulates the activity of a dsDNA-binding protein. This is Putative double-stranded DNA mimic protein CKO_01325 from Citrobacter koseri (strain ATCC BAA-895 / CDC 4225-83 / SGSC4696).